A 103-amino-acid polypeptide reads, in one-letter code: Pyrimidine/purine nucleoside phosphorylase (103 aa).

Belongs to the nucleoside phosphorylase PpnP family.

The enzyme catalyses a purine D-ribonucleoside + phosphate = a purine nucleobase + alpha-D-ribose 1-phosphate. It carries out the reaction adenosine + phosphate = alpha-D-ribose 1-phosphate + adenine. The catalysed reaction is cytidine + phosphate = cytosine + alpha-D-ribose 1-phosphate. It catalyses the reaction guanosine + phosphate = alpha-D-ribose 1-phosphate + guanine. The enzyme catalyses inosine + phosphate = alpha-D-ribose 1-phosphate + hypoxanthine. It carries out the reaction thymidine + phosphate = 2-deoxy-alpha-D-ribose 1-phosphate + thymine. The catalysed reaction is uridine + phosphate = alpha-D-ribose 1-phosphate + uracil. It catalyses the reaction xanthosine + phosphate = alpha-D-ribose 1-phosphate + xanthine. Its function is as follows. Catalyzes the phosphorolysis of diverse nucleosides, yielding D-ribose 1-phosphate and the respective free bases. Can use uridine, adenosine, guanosine, cytidine, thymidine, inosine and xanthosine as substrates. Also catalyzes the reverse reactions. The chain is Pyrimidine/purine nucleoside phosphorylase from Shewanella sp. (strain ANA-3).